A 399-amino-acid chain; its full sequence is Lymphoid enhancer-binding factor 1 (399 aa).

Residues 1 to 14 (MPQLSGGGGGGGGD) show a composition bias toward gly residues. Positions 1–62 (MPQLSGGGGG…IKSSLVNESE (62 aa)) are CTNNB1-binding. A disordered region spans residues 1 to 104 (MPQLSGGGGG…KHPDGGLYNK (104 aa)). Composition is skewed to basic and acidic residues over residues 24 to 45 (IPFK…SHPE) and 82 to 98 (PYHD…KHPD). Lysine 27 participates in a covalent cross-link: Glycyl lysine isopeptide (Lys-Gly) (interchain with G-Cter in SUMO). At serine 132 the chain carries Phosphoserine. Phosphothreonine; by NLK is present on threonine 155. Serine 166 bears the Phosphoserine; by NLK mark. 2 disordered regions span residues 166–192 (SPGS…PAPD) and 268–298 (VKQE…KRPH). Lysine 269 participates in a covalent cross-link: Glycyl lysine isopeptide (Lys-Gly) (interchain with G-Cter in SUMO). The span at 269 to 296 (KQEHPHTDSDLMHVKPQHEQRKEQEPKR) shows a compositional bias: basic and acidic residues. A DNA-binding region (HMG box) is located at residues 299–367 (IKKPLNAFML…LHMQLYPGWS (69 aa)). Positions 369–399 (RDNYGKKKKRKREKLQESASGTGPRMTAAYI) are disordered.

The protein belongs to the TCF/LEF family. In terms of assembly, binds the armadillo repeat of CTNNB1 and forms a stable complex. Interacts with EP300, TLE1 and PIASG. Binds ALYREF/THOC4, MDFI and MDFIC. Interacts with NLK. Interacts with DAZAP2. Post-translationally, phosphorylated at Thr-155 and/or Ser-166 by NLK. Phosphorylation by NLK at these sites represses LEF1-mediated transcriptional activation of target genes of the canonical Wnt signaling pathway. Detected in thymus. Not detected in normal colon, but highly expressed in colon cancer biopsies and colon cancer cell lines. Expressed in several pancreatic tumors and weakly expressed in normal pancreatic tissue. Isoforms 1 and 5 are detected in several pancreatic cell lines.

It is found in the nucleus. Functionally, transcription factor that binds DNA in a sequence-specific manner. Participates in the Wnt signaling pathway. Activates transcription of target genes in the presence of CTNNB1 and EP300. PIAG antagonizes both Wnt-dependent and Wnt-independent activation by LEF1. TLE1, TLE2, TLE3 and TLE4 repress transactivation mediated by LEF1 and CTNNB1. Regulates T-cell receptor alpha enhancer function. Required for IL17A expressing gamma-delta T-cell maturation and development, via binding to regulator loci of BLK to modulate expression. Acts as a positive regulator of odontoblast differentiation during mesenchymal tooth germ formation, expression is repressed during the bell stage by MSX1-mediated inhibition of CTNNB1 signaling. May play a role in hair cell differentiation and follicle morphogenesis. Transcriptionally activates MYC and CCND1 expression and enhances proliferation of pancreatic tumor cells. In terms of biological role, lacks the CTNNB1 interaction domain and may therefore be an antagonist for Wnt signaling. Its function is as follows. Transcriptionally activates the fibronectin promoter, binds to and represses transcription from the E-cadherin promoter in a CTNNB1-independent manner, and is involved in reducing cellular aggregation and increasing cell migration of pancreatic cancer cells. The sequence is that of Lymphoid enhancer-binding factor 1 from Homo sapiens (Human).